We begin with the raw amino-acid sequence, 274 residues long: Formamidopyrimidine-DNA glycosylase (274 aa).

Residue Pro-2 is the Schiff-base intermediate with DNA of the active site. Glu-3 (proton donor) is an active-site residue. Lys-59 (proton donor; for beta-elimination activity) is an active-site residue. The DNA site is built by His-93, Arg-112, and Lys-153. Residues Gln-238–Gln-272 form an FPG-type zinc finger. The active-site Proton donor; for delta-elimination activity is the Arg-262.

The protein belongs to the FPG family. Monomer. Zn(2+) is required as a cofactor.

The catalysed reaction is Hydrolysis of DNA containing ring-opened 7-methylguanine residues, releasing 2,6-diamino-4-hydroxy-5-(N-methyl)formamidopyrimidine.. The enzyme catalyses 2'-deoxyribonucleotide-(2'-deoxyribose 5'-phosphate)-2'-deoxyribonucleotide-DNA = a 3'-end 2'-deoxyribonucleotide-(2,3-dehydro-2,3-deoxyribose 5'-phosphate)-DNA + a 5'-end 5'-phospho-2'-deoxyribonucleoside-DNA + H(+). Functionally, involved in base excision repair of DNA damaged by oxidation or by mutagenic agents. Acts as a DNA glycosylase that recognizes and removes damaged bases. Has a preference for oxidized purines, such as 7,8-dihydro-8-oxoguanine (8-oxoG). Has AP (apurinic/apyrimidinic) lyase activity and introduces nicks in the DNA strand. Cleaves the DNA backbone by beta-delta elimination to generate a single-strand break at the site of the removed base with both 3'- and 5'-phosphates. This Mycoplasma mobile (strain ATCC 43663 / 163K / NCTC 11711) (Mesomycoplasma mobile) protein is Formamidopyrimidine-DNA glycosylase.